Consider the following 282-residue polypeptide: 4-hydroxy-3-methylbut-2-enyl diphosphate reductase (282 aa).

Position 14 (Cys14) interacts with [4Fe-4S] cluster. His43 and His78 together coordinate (2E)-4-hydroxy-3-methylbut-2-enyl diphosphate. Dimethylallyl diphosphate contacts are provided by His43 and His78. His43 and His78 together coordinate isopentenyl diphosphate. Position 100 (Cys100) interacts with [4Fe-4S] cluster. Position 128 (His128) interacts with (2E)-4-hydroxy-3-methylbut-2-enyl diphosphate. Residue His128 participates in dimethylallyl diphosphate binding. His128 is an isopentenyl diphosphate binding site. Residue Glu130 is the Proton donor of the active site. Residue Thr164 coordinates (2E)-4-hydroxy-3-methylbut-2-enyl diphosphate. Cys192 contributes to the [4Fe-4S] cluster binding site. Ser220, Ser221, Asn222, and Ser266 together coordinate (2E)-4-hydroxy-3-methylbut-2-enyl diphosphate. Ser220, Ser221, Asn222, and Ser266 together coordinate dimethylallyl diphosphate. The isopentenyl diphosphate site is built by Ser220, Ser221, Asn222, and Ser266.

The protein belongs to the IspH family. [4Fe-4S] cluster is required as a cofactor.

It carries out the reaction isopentenyl diphosphate + 2 oxidized [2Fe-2S]-[ferredoxin] + H2O = (2E)-4-hydroxy-3-methylbut-2-enyl diphosphate + 2 reduced [2Fe-2S]-[ferredoxin] + 2 H(+). It catalyses the reaction dimethylallyl diphosphate + 2 oxidized [2Fe-2S]-[ferredoxin] + H2O = (2E)-4-hydroxy-3-methylbut-2-enyl diphosphate + 2 reduced [2Fe-2S]-[ferredoxin] + 2 H(+). The protein operates within isoprenoid biosynthesis; dimethylallyl diphosphate biosynthesis; dimethylallyl diphosphate from (2E)-4-hydroxy-3-methylbutenyl diphosphate: step 1/1. Its pathway is isoprenoid biosynthesis; isopentenyl diphosphate biosynthesis via DXP pathway; isopentenyl diphosphate from 1-deoxy-D-xylulose 5-phosphate: step 6/6. Catalyzes the conversion of 1-hydroxy-2-methyl-2-(E)-butenyl 4-diphosphate (HMBPP) into a mixture of isopentenyl diphosphate (IPP) and dimethylallyl diphosphate (DMAPP). Acts in the terminal step of the DOXP/MEP pathway for isoprenoid precursor biosynthesis. The polypeptide is 4-hydroxy-3-methylbut-2-enyl diphosphate reductase (Clostridium perfringens (strain ATCC 13124 / DSM 756 / JCM 1290 / NCIMB 6125 / NCTC 8237 / Type A)).